A 255-amino-acid polypeptide reads, in one-letter code: Taurine import ATP-binding protein TauB (255 aa).

Residues 2 to 229 (LQISHLYADY…RFVAGESSRS (228 aa)) form the ABC transporter domain. ATP is bound at residue 34–41 (GPSGCGKT).

The protein belongs to the ABC transporter superfamily. Taurine importer (TC 3.A.1.17.1) family. The complex is composed of two ATP-binding proteins (TauB), two transmembrane proteins (TauC) and a solute-binding protein (TauA).

The protein localises to the cell inner membrane. The catalysed reaction is taurine(out) + ATP + H2O = taurine(in) + ADP + phosphate + H(+). In terms of biological role, part of the ABC transporter complex TauABC involved in taurine import. Responsible for energy coupling to the transport system. The protein is Taurine import ATP-binding protein TauB of Shigella flexneri.